The chain runs to 394 residues: Phosphoglycerate kinase (394 aa).

Residues 21–23, Arg-37, 60–63, Arg-115, and Arg-148 each bind substrate; these read DLN and HLGR. Residues Lys-199, Glu-321, and 347 to 350 contribute to the ATP site; that span reads GGDT.

Belongs to the phosphoglycerate kinase family. Monomer.

The protein resides in the cytoplasm. It catalyses the reaction (2R)-3-phosphoglycerate + ATP = (2R)-3-phospho-glyceroyl phosphate + ADP. Its pathway is carbohydrate degradation; glycolysis; pyruvate from D-glyceraldehyde 3-phosphate: step 2/5. This chain is Phosphoglycerate kinase, found in Azoarcus sp. (strain BH72).